Consider the following 677-residue polypeptide: Vertnin (677 aa).

Disordered regions lie at residues 356–376 and 458–490; these read GSTG…SSPE and HSGS…KLSP. Residues 458–472 are compositionally biased toward basic and acidic residues; sequence HSGSSEEGSDADKSQ.

The protein belongs to the vertnin family.

It is found in the nucleus. Functions as a transcriptional repressor that modulates bmp2b expression during dorsoventral patterning. The chain is Vertnin (vrtn) from Danio rerio (Zebrafish).